A 380-amino-acid chain; its full sequence is Homoserine O-acetyltransferase (380 aa).

The AB hydrolase-1 domain maps to N70–I366. S186 (nucleophile) is an active-site residue. R250 lines the substrate pocket. Catalysis depends on residues D333 and H361. D362 contacts substrate.

Belongs to the AB hydrolase superfamily. MetX family. In terms of assembly, homodimer.

The protein resides in the cytoplasm. The catalysed reaction is L-homoserine + acetyl-CoA = O-acetyl-L-homoserine + CoA. The protein operates within amino-acid biosynthesis; L-methionine biosynthesis via de novo pathway; O-acetyl-L-homoserine from L-homoserine: step 1/1. Transfers an acetyl group from acetyl-CoA to L-homoserine, forming acetyl-L-homoserine. The sequence is that of Homoserine O-acetyltransferase from Thermus thermophilus (strain ATCC 27634 / DSM 579 / HB8).